Reading from the N-terminus, the 610-residue chain is Manganese lipoxygenase (610 aa).

A signal peptide spans 1 to 16 (MVALLIFLGIFTCVET). The Lipoxygenase domain maps to 47–610 (FTLPNEDDEI…PGVIPFYLSV (564 aa)). Asn-157 and Asn-259 each carry an N-linked (GlcNAc...) asparagine glycan. Mn(2+) is bound by residues His-290 and His-295. Asn-386 carries N-linked (GlcNAc...) asparagine glycosylation. Mn(2+) contacts are provided by His-475 and Asn-479. N-linked (GlcNAc...) asparagine glycosylation occurs at Asn-540. Residue Val-610 coordinates Mn(2+).

The protein belongs to the lipoxygenase family. Manganese lipoxygenase subfamily. Mn(2+) is required as a cofactor. In terms of processing, N- and O-glycosylated.

It localises to the secreted. It catalyses the reaction (9Z,12Z)-octadecadienoate + O2 = (11S)-hydroperoxy-(9Z,12Z)-octadecadienoate. The catalysed reaction is (9Z,12Z)-octadecadienoate + O2 = (11R)-hydroperoxy-(9Z,12Z)-octadecadienoate. The enzyme catalyses (9Z,12Z)-octadecadienoate + O2 = (13S)-hydroperoxy-(9Z,11E)-octadecadienoate. It carries out the reaction (9Z,12Z,15Z)-octadecatrienoate + O2 = (11S)-hydroperoxy-(9Z,12Z,15Z)-octadecatrienoate. Its function is as follows. Lipoxygenase that metabolizes linoleic and alpha-linolenic acids to 9-, 11- and 13-hydroperoxy fatty acids. Oxidizes linoleic acid to mainly 11R-, 13S- and racemic 9-HPODE, and alpha-linolenic acid to 11-HPOTrE. The sequence is that of Manganese lipoxygenase from Fusarium oxysporum (strain Fo5176) (Fusarium vascular wilt).